The following is a 307-amino-acid chain: Non-homologous end joining protein Ku (307 aa).

The Ku domain maps to 11 to 179 (LSFGLVSIPV…EVRSMKDLNI (169 aa)). Composition is skewed to low complexity over residues 257 to 267 (RGGAKAKPAAA) and 290 to 307 (ARAP…RARK). Residues 257-307 (RGGAKAKPAAAPRRKAPEPVAGMAEATRARKPAARAPKSPAEAPAKVRARK) form a disordered region.

The protein belongs to the prokaryotic Ku family. In terms of assembly, homodimer. Interacts with LigD.

Functionally, with LigD forms a non-homologous end joining (NHEJ) DNA repair enzyme, which repairs dsDNA breaks with reduced fidelity. Binds linear dsDNA with 5'- and 3'- overhangs but not closed circular dsDNA nor ssDNA. Recruits and stimulates the ligase activity of LigD. The chain is Non-homologous end joining protein Ku from Paraburkholderia phymatum (strain DSM 17167 / CIP 108236 / LMG 21445 / STM815) (Burkholderia phymatum).